Reading from the N-terminus, the 282-residue chain is Nucleotide-binding protein XCC2806 (282 aa).

Gly5 to Ser12 contributes to the ATP binding site. Asp57–Ser60 contributes to the GTP binding site.

It belongs to the RapZ-like family.

Functionally, displays ATPase and GTPase activities. The protein is Nucleotide-binding protein XCC2806 of Xanthomonas campestris pv. campestris (strain ATCC 33913 / DSM 3586 / NCPPB 528 / LMG 568 / P 25).